Reading from the N-terminus, the 442-residue chain is Inhibitor of Apoptosis OPG037 (442 aa).

6 ANK repeats span residues Asp67–Ala96, His100–Asn131, Asp203–Lys233, Phe237–Asp267, Tyr292–Asp321, and Met323–Ser347.

It belongs to the orthopoxvirus OPG037 family. May interact with host caspase-9-Apaf-1 complex.

The protein resides in the host cytoplasm. In terms of biological role, inhibits host apoptosis. Acts by associating with host apoptosome. The polypeptide is Inhibitor of Apoptosis OPG037 (OPG037) (Monkeypox virus).